We begin with the raw amino-acid sequence, 303 residues long: Recombination-associated protein RdgC (303 aa).

The protein belongs to the RdgC family.

Its subcellular location is the cytoplasm. It localises to the nucleoid. Functionally, may be involved in recombination. This is Recombination-associated protein RdgC from Pseudoalteromonas translucida (strain TAC 125).